Here is a 346-residue protein sequence, read N- to C-terminus: Protein SHI RELATED SEQUENCE 5 (346 aa).

The segment at 7 to 31 (LGGRDNNSNNNKQDHHQVDKDHHHQ) is disordered. Over residues 18–31 (KQDHHQVDKDHHHQ) the composition is skewed to basic and acidic residues. Residues Cys-125, Cys-128, Cys-136, Cys-141, Cys-145, and Cys-152 each coordinate Zn(2+). Residues 125-152 (CQDCGNQAKKDCPHMRCRTCCKSRGFHC) constitute a DNA-binding region (zn(2)-C6 fungal-type; degenerate). The span at 175-186 (SLQHHSASSRET) shows a compositional bias: polar residues. A disordered region spans residues 175 to 215 (SLQHHSASSRETQNAKRLREASGGDNNDDKDHSGGGGSALA). The span at 187-207 (QNAKRLREASGGDNNDDKDHS) shows a compositional bias: basic and acidic residues. The Required for homo- and heterodimerization motif lies at 269–272 (IGGH).

This sequence belongs to the SHI protein family.

The protein localises to the nucleus. Functionally, transcription activator that binds DNA on 5'-ACTCTAC-3' and promotes auxin homeostasis-regulating gene expression (e.g. YUC genes), as well as genes affecting stamen development, cell expansion and timing of flowering. Synergistically with other SHI-related proteins, regulates gynoecium, stamen and leaf development in a dose-dependent manner, controlling apical-basal patterning. Promotes style and stigma formation, and influences vascular development during gynoecium development. May also have a role in the formation and/or maintenance of the shoot apical meristem (SAM). The protein is Protein SHI RELATED SEQUENCE 5 (SRS5) of Arabidopsis thaliana (Mouse-ear cress).